We begin with the raw amino-acid sequence, 1072 residues long: DNA-directed RNA polymerase subunit beta (1072 aa).

Belongs to the RNA polymerase beta chain family. In plastids the minimal PEP RNA polymerase catalytic core is composed of four subunits: alpha, beta, beta', and beta''. When a (nuclear-encoded) sigma factor is associated with the core the holoenzyme is formed, which can initiate transcription.

The protein localises to the plastid. It localises to the chloroplast. It carries out the reaction RNA(n) + a ribonucleoside 5'-triphosphate = RNA(n+1) + diphosphate. Its function is as follows. DNA-dependent RNA polymerase catalyzes the transcription of DNA into RNA using the four ribonucleoside triphosphates as substrates. The chain is DNA-directed RNA polymerase subunit beta from Lepidium virginicum (Virginia pepperweed).